The chain runs to 549 residues: Oxygen-dependent choline dehydrogenase (549 aa).

4–33 (DFVIIGSGSAGSALAYRLSEDGRNSVIVLE) contributes to the FAD binding site. H465 acts as the Proton acceptor in catalysis.

This sequence belongs to the GMC oxidoreductase family. It depends on FAD as a cofactor.

It localises to the cell membrane. The enzyme catalyses choline + A = betaine aldehyde + AH2. It catalyses the reaction betaine aldehyde + NAD(+) + H2O = glycine betaine + NADH + 2 H(+). Its pathway is amine and polyamine biosynthesis; betaine biosynthesis via choline pathway; betaine aldehyde from choline (cytochrome c reductase route): step 1/1. Involved in the biosynthesis of the osmoprotectant glycine betaine. Catalyzes the oxidation of choline to betaine aldehyde and betaine aldehyde to glycine betaine at the same rate. The polypeptide is Oxygen-dependent choline dehydrogenase (Rhizobium meliloti (strain 1021) (Ensifer meliloti)).